The primary structure comprises 145 residues: Probable D-aminoacyl-tRNA deacylase (145 aa).

The protein belongs to the DTD family. Homodimer.

Its subcellular location is the cytoplasm. The catalysed reaction is glycyl-tRNA(Ala) + H2O = tRNA(Ala) + glycine + H(+). The enzyme catalyses a D-aminoacyl-tRNA + H2O = a tRNA + a D-alpha-amino acid + H(+). Its function is as follows. An aminoacyl-tRNA editing enzyme that deacylates mischarged D-aminoacyl-tRNAs. Also deacylates mischarged glycyl-tRNA(Ala), protecting cells against glycine mischarging by AlaRS. Acts via tRNA-based rather than protein-based catalysis; rejects L-amino acids rather than detecting D-amino acids in the active site. By recycling D-aminoacyl-tRNA to D-amino acids and free tRNA molecules, this enzyme counteracts the toxicity associated with the formation of D-aminoacyl-tRNA entities in vivo and helps enforce protein L-homochirality. The sequence is that of Probable D-aminoacyl-tRNA deacylase from Shigella flexneri serotype 5b (strain 8401).